A 372-amino-acid chain; its full sequence is Formylglycine-generating enzyme (372 aa).

The signal sequence occupies residues 1 to 31 (MAAPAREPALRCCIRLARVFLLLVLACEVAG). Cys-48 and Cys-50 are oxidised to a cystine. The tract at residues 61–80 (SSAAAQRYSREANAPGLTSG) is disordered. Glu-128 provides a ligand contact to Ca(2+). A glycan (N-linked (GlcNAc...) asparagine) is linked at Asn-139. 2 disulfides stabilise this stretch: Cys-216-Cys-363 and Cys-233-Cys-344. 7 residues coordinate Ca(2+): Asn-257, Ile-258, Asp-271, Phe-273, Asn-291, Gly-294, and Glu-298. Cys-334 and Cys-339 together coordinate Cu(2+). Positions 339 to 358 (CYRYRCAARSQNTPDSSASN) are interaction with sulfatases.

This sequence belongs to the sulfatase-modifying factor family. In terms of assembly, monomer, homodimer and heterodimer with SUMF2. Cu(2+) serves as cofactor. N-glycosylated. Contains high-mannose-type oligosaccharides.

Its subcellular location is the endoplasmic reticulum lumen. The enzyme catalyses L-cysteinyl-[sulfatase] + 2 a thiol + O2 = an organic disulfide + 3-oxo-L-alanyl-[sulfatase] + hydrogen sulfide + H2O + H(+). It participates in protein modification; sulfatase oxidation. Its function is as follows. Oxidase that catalyzes the conversion of cysteine to 3-oxoalanine on target proteins, using molecular oxygen and an unidentified reducing agent. 3-oxoalanine modification, which is also named formylglycine (fGly), occurs in the maturation of arylsulfatases and some alkaline phosphatases that use the hydrated form of 3-oxoalanine as a catalytic nucleophile. Known substrates include GALNS, ARSA, STS and ARSE. This is Formylglycine-generating enzyme from Mus musculus (Mouse).